A 650-amino-acid polypeptide reads, in one-letter code: DNA gyrase subunit B (650 aa).

Basic and acidic residues predominate over residues 400-414; sequence RRSQEARELTRRKSP. Residues 400 to 422 form a disordered region; it reads RRSQEARELTRRKSPFDSGSLPG. The region spanning 435-549 is the Toprim domain; it reads SELYIVEGDS…QGNIYIAQPP (115 aa). Residues Glu-441, Asp-514, and Asp-516 each coordinate Mg(2+).

This sequence belongs to the type II topoisomerase GyrB family. Heterotetramer, composed of two GyrA and two GyrB chains. In the heterotetramer, GyrA contains the active site tyrosine that forms a transient covalent intermediate with DNA, while GyrB binds cofactors and catalyzes ATP hydrolysis. Requires Mg(2+) as cofactor. It depends on Mn(2+) as a cofactor. The cofactor is Ca(2+).

The protein resides in the cytoplasm. The catalysed reaction is ATP-dependent breakage, passage and rejoining of double-stranded DNA.. A type II topoisomerase that negatively supercoils closed circular double-stranded (ds) DNA in an ATP-dependent manner to modulate DNA topology and maintain chromosomes in an underwound state. Negative supercoiling favors strand separation, and DNA replication, transcription, recombination and repair, all of which involve strand separation. Also able to catalyze the interconversion of other topological isomers of dsDNA rings, including catenanes and knotted rings. Type II topoisomerases break and join 2 DNA strands simultaneously in an ATP-dependent manner. This chain is DNA gyrase subunit B, found in Mycoplasma pneumoniae (strain ATCC 29342 / M129 / Subtype 1) (Mycoplasmoides pneumoniae).